The following is a 479-amino-acid chain: MAWNTNLRWRLPLTCLLLQVAMVILFGVFVRYDFDADAHWWTERKHKNLSEVENEFYYRYPSFQDVHVMVFVGFGFLMTFLQRYGFSAVGFNFLLAAFGIQWALLMQGWFHFLEGRYIVVGVENLINADFCVASVCVAFGAVLGKVSPIQLLIMTFFQVTLFAVNEFILLNLLKVKDAGGSMTIHTFYAYFELTVTRILYRRNLEQSKERQSSAYQSDLFAMIGTLFLWMYWPSFNSAISYHGDSQHRAAINTYCSLAACVLTSVAVSSALHKKGKLDMVHIQNATLAGGVAVGTTAEMMLMPYGALIIGFICGIISTLGFVYLTPFLESRLHIQDTCGINNLHGIPGIIGGIVGAVTAASASLEVYGKEGLVHSFDFQDFKRDWTARTQGKFQIYGLLVTLAMALMGGIIVGLILRLPFWGQPSDENCFEDAVYWEMPEGNSTVYIPEDPTFKPSGPSVPSVPMVSPLPMASSVPLVP.

The Cytoplasmic portion of the chain corresponds to 1 to 9 (MAWNTNLRW). The helical transmembrane segment at 10-30 (RLPLTCLLLQVAMVILFGVFV) threads the bilayer. Residues 31 to 60 (RYDFDADAHWWTERKHKNLSEVENEFYYRY) are Extracellular-facing. N48 carries an N-linked (GlcNAc...) asparagine glycan. A helical membrane pass occupies residues 61–81 (PSFQDVHVMVFVGFGFLMTFL). At 82–85 (QRYG) the chain is on the cytoplasmic side. A helical transmembrane segment spans residues 86-106 (FSAVGFNFLLAAFGIQWALLM). The Extracellular segment spans residues 107–123 (QGWFHFLEGRYIVVGVE). Residues 124-144 (NLINADFCVASVCVAFGAVLG) traverse the membrane as a helical segment. Residues 145–148 (KVSP) are Cytoplasmic-facing. Residues 149 to 169 (IQLLIMTFFQVTLFAVNEFIL) form a helical membrane-spanning segment. The Extracellular portion of the chain corresponds to 170–177 (LNLLKVKD). The helical transmembrane segment at 178–200 (AGGSMTIHTFYAYFELTVTRILY) threads the bilayer. Residues 201–218 (RRNLEQSKERQSSAYQSD) are Cytoplasmic-facing. A helical transmembrane segment spans residues 219 to 239 (LFAMIGTLFLWMYWPSFNSAI). The Extracellular segment spans residues 240–250 (SYHGDSQHRAA). A helical membrane pass occupies residues 251–271 (INTYCSLAACVLTSVAVSSAL). The Cytoplasmic portion of the chain corresponds to 272 to 281 (HKKGKLDMVH). The chain crosses the membrane as a helical span at residues 282-302 (IQNATLAGGVAVGTTAEMMLM). Residue P303 is a topological domain, extracellular. Residues 304-324 (YGALIIGFICGIISTLGFVYL) traverse the membrane as a helical segment. The Cytoplasmic segment spans residues 325-345 (TPFLESRLHIQDTCGINNLHG). A helical membrane pass occupies residues 346–366 (IPGIIGGIVGAVTAASASLEV). Residues 367–394 (YGKEGLVHSFDFQDFKRDWTARTQGKFQ) lie on the Extracellular side of the membrane. The helical transmembrane segment at 395-415 (IYGLLVTLAMALMGGIIVGLI) threads the bilayer. Topologically, residues 416–479 (LRLPFWGQPS…PMASSVPLVP (64 aa)) are cytoplasmic.

It belongs to the ammonium transporter (TC 2.A.49) family. Rh subfamily. Homotrimer. N-glycosylated.

The protein resides in the apical cell membrane. The catalysed reaction is NH4(+)(in) = NH4(+)(out). The enzyme catalyses methylamine(out) = methylamine(in). It catalyses the reaction CO2(out) = CO2(in). Ammonium transporter involved in the maintenance of acid-base homeostasis. Transports ammonium and its related derivative methylammonium across the plasma membrane of epithelial cells likely contributing to renal transepithelial ammonia transport and ammonia metabolism. Postulated to primarily mediate an electroneutral bidirectional transport of NH3 ammonia species according to a mechanism that implies interaction of an NH4(+) ion with acidic residues of the pore entry followed by dissociation of NH4(+) into NH3 and H(+). As a result NH3 transits through the central pore and is protonated on the extracellular side reforming NH4(+). May act as a CO2 channel providing for renal acid secretion. The protein is Ammonium transporter Rh type C (RHCG) of Macaca mulatta (Rhesus macaque).